The primary structure comprises 125 residues: Small ribosomal subunit protein uS12m (125 aa).

This sequence belongs to the universal ribosomal protein uS12 family.

The protein localises to the mitochondrion. Its function is as follows. Protein S12 is involved in the translation initiation step. This is Small ribosomal subunit protein uS12m (RPS12) from Helianthus annuus (Common sunflower).